Here is a 277-residue protein sequence, read N- to C-terminus: Trypsin-2 (277 aa).

Positions 1 to 19 (MSNKIAILLLAVVVAVVAC) are cleaved as a signal peptide. Residues 20-50 (AQAQPSRRHHLVHPLLPRFLPRLHRDSNGHR) constitute a propeptide, activation peptide. One can recognise a Peptidase S1 domain in the interval 51-276 (VVGGFQIDVS…VRDWVRENSG (226 aa)). A disulfide bond links C76 and C92. Active-site charge relay system residues include H91 and D136. Disulfide bonds link C201–C217 and C228–C252. S232 (charge relay system) is an active-site residue.

Belongs to the peptidase S1 family. In terms of tissue distribution, midgut.

Its subcellular location is the secreted. The catalysed reaction is Preferential cleavage: Arg-|-Xaa, Lys-|-Xaa.. Major function may be to aid in digestion of the blood meal. This chain is Trypsin-2 (TRYP2), found in Anopheles gambiae (African malaria mosquito).